The sequence spans 157 residues: Endoribonuclease YbeY (157 aa).

Zn(2+)-binding residues include His-118, His-122, and His-128.

The protein belongs to the endoribonuclease YbeY family. Requires Zn(2+) as cofactor.

Its subcellular location is the cytoplasm. In terms of biological role, single strand-specific metallo-endoribonuclease involved in late-stage 70S ribosome quality control and in maturation of the 3' terminus of the 16S rRNA. This is Endoribonuclease YbeY from Bordetella parapertussis (strain 12822 / ATCC BAA-587 / NCTC 13253).